We begin with the raw amino-acid sequence, 329 residues long: NADH-quinone oxidoreductase subunit H (329 aa).

Helical transmembrane passes span 9–29, 42–62, 75–95, 117–137, 154–174, 188–208, 238–258, 269–291, and 309–329; these read LIKILILVAVFSALGGFATYI, GPCYVGPFGLLQVAADGIKLF, FIFTLAPIIAMVSAFVSMAPI, IGFLFFLAVGAAGIYAPILAG, IQLLSFEVVSTLTILAPLMVV, GGFLDWLVFKQPLAFVLFLIA, LKWGMFFLAEYAHLFAFSFVI, WGFIPGGIAILIKAGFFVFLSMW, and WKIMLPLALLNIVLTGIIILI.

The protein belongs to the complex I subunit 1 family. As to quaternary structure, NDH-1 is composed of 14 different subunits. Subunits NuoA, H, J, K, L, M, N constitute the membrane sector of the complex.

The protein localises to the cell inner membrane. It catalyses the reaction a quinone + NADH + 5 H(+)(in) = a quinol + NAD(+) + 4 H(+)(out). Its function is as follows. NDH-1 shuttles electrons from NADH, via FMN and iron-sulfur (Fe-S) centers, to quinones in the respiratory chain. The immediate electron acceptor for the enzyme in this species is believed to be ubiquinone. Couples the redox reaction to proton translocation (for every two electrons transferred, four hydrogen ions are translocated across the cytoplasmic membrane), and thus conserves the redox energy in a proton gradient. This subunit may bind ubiquinone. The chain is NADH-quinone oxidoreductase subunit H from Helicobacter pylori (strain Shi470).